Here is a 103-residue protein sequence, read N- to C-terminus: Large ribosomal subunit protein bL21 (103 aa).

It belongs to the bacterial ribosomal protein bL21 family. In terms of assembly, part of the 50S ribosomal subunit. Contacts protein L20.

Functionally, this protein binds to 23S rRNA in the presence of protein L20. The protein is Large ribosomal subunit protein bL21 of Vibrio atlanticus (strain LGP32) (Vibrio splendidus (strain Mel32)).